A 111-amino-acid chain; its full sequence is Beta-microseminoprotein (111 aa).

Positions 1–20 (MKFLLGTLVVLATFVTLCNS) are cleaved as a signal peptide. Glutamine 21 carries the pyrrolidone carboxylic acid modification. Disulfide bonds link cysteine 22–cysteine 67, cysteine 35–cysteine 59, cysteine 54–cysteine 90, cysteine 57–cysteine 66, and cysteine 81–cysteine 104.

Belongs to the beta-microseminoprotein family. Homodimer; Interacts with PI16. Corpora lutea, mostly in the luteal cells surrounding blood vessels.

The protein localises to the secreted. This Sus scrofa (Pig) protein is Beta-microseminoprotein (MSMB).